Here is a 128-residue protein sequence, read N- to C-terminus: Con-Ins F2 (128 aa).

The N-terminal stretch at methionine 1–glycine 24 is a signal peptide. 4 cysteine pairs are disulfide-bonded: cysteine 29-cysteine 104, cysteine 41-cysteine 107, cysteine 53-cysteine 120, and cysteine 106-cysteine 111. The propeptide at leucine 59–arginine 89 is c peptide. Glutamate 115 bears the 4-carboxyglutamate; partial mark. A Serine amide modification is found at serine 127.

The protein belongs to the insulin family. Heterodimer of A and B chains; disulfide-linked. As to expression, expressed by the venom gland.

It is found in the secreted. Functionally, this venom insulin facilitates prey capture by rapidly inducing hypoglycemic shock. Intraperitoneal injection of this peptide into zebrafish lowers blood glucose with the same potency than human insulin. In vivo, when applied to water, this peptide reduces overall locomotor activity of zebrafish larvae, observed as a significant decrease in the percentage of time spent swimming and movement frequency. This Conus floridulus (Cone snail) protein is Con-Ins F2.